The chain runs to 392 residues: Phosphoglycerate kinase (392 aa).

Substrate is bound by residues 21 to 23, Arg-36, 59 to 62, Arg-114, and Arg-147; these read DLN and HLGR. ATP is bound by residues Lys-198, Glu-320, and 346 to 349; that span reads GGDT.

Belongs to the phosphoglycerate kinase family. Monomer.

Its subcellular location is the cytoplasm. The enzyme catalyses (2R)-3-phosphoglycerate + ATP = (2R)-3-phospho-glyceroyl phosphate + ADP. Its pathway is carbohydrate degradation; glycolysis; pyruvate from D-glyceraldehyde 3-phosphate: step 2/5. The protein is Phosphoglycerate kinase of Nitrosomonas europaea (strain ATCC 19718 / CIP 103999 / KCTC 2705 / NBRC 14298).